The following is a 449-amino-acid chain: GTPase Der (449 aa).

EngA-type G domains are found at residues 3 to 167 (AVIA…PTSE) and 178 to 351 (PRIA…IDSR). GTP-binding positions include 9-16 (GRPNVGKS), 56-60 (DTGGF), 119-122 (NKMD), 184-191 (GRPNVGKS), 231-235 (DTAGM), and 296-299 (NKWD). The KH-like domain occupies 352–436 (RHFSTAELNR…PLRLVFRQGE (85 aa)).

The protein belongs to the TRAFAC class TrmE-Era-EngA-EngB-Septin-like GTPase superfamily. EngA (Der) GTPase family. In terms of assembly, associates with the 50S ribosomal subunit.

In terms of biological role, GTPase that plays an essential role in the late steps of ribosome biogenesis. The polypeptide is GTPase Der (Acidithiobacillus ferrooxidans (strain ATCC 23270 / DSM 14882 / CIP 104768 / NCIMB 8455) (Ferrobacillus ferrooxidans (strain ATCC 23270))).